The primary structure comprises 282 residues: ABC transporter I family member 21 (282 aa).

Positions 13–248 (IRVSGMQFSY…KTSPNLLSVV (236 aa)) constitute an ABC transporter domain. ATP is bound at residue 46 to 53 (GANGSGKT).

It belongs to the ABC transporter superfamily. ABCI family. Expressed in root elongating zone and root meristem, as well as in elongating etiolated hypocotyls.

It is found in the cytoplasm. The polypeptide is ABC transporter I family member 21 (ABCI21) (Arabidopsis thaliana (Mouse-ear cress)).